The primary structure comprises 557 residues: Potassium-transporting ATPase potassium-binding subunit (557 aa).

Transmembrane regions (helical) follow at residues 6–26, 59–79, 127–147, 172–192, 247–267, 278–298, 363–383, 410–430, 475–495, and 520–540; these read IQLL…GLGL, ALSL…ILFF, AGLT…LLAL, LYVL…FGVV, ISNF…VFLY, WAIF…VWTF, IVFG…LLTV, ILGI…SVSV, VMIA…VLVI, and FYIL…FPVL.

It belongs to the KdpA family. As to quaternary structure, the system is composed of three essential subunits: KdpA, KdpB and KdpC.

The protein resides in the cell inner membrane. Functionally, part of the high-affinity ATP-driven potassium transport (or Kdp) system, which catalyzes the hydrolysis of ATP coupled with the electrogenic transport of potassium into the cytoplasm. This subunit binds the periplasmic potassium ions and delivers the ions to the membrane domain of KdpB through an intramembrane tunnel. The sequence is that of Potassium-transporting ATPase potassium-binding subunit from Leptospira interrogans serogroup Icterohaemorrhagiae serovar copenhageni (strain Fiocruz L1-130).